The chain runs to 2221 residues: Voltage-dependent L-type calcium channel subunit alpha-1C (2221 aa).

A disordered region spans residues methionine 1–tyrosine 20. Over methionine 1–lysine 124 the chain is Cytoplasmic. Residues glycine 47 to alanine 68 are calmodulin-binding. Positions isoleucine 73 to threonine 98 are disordered. A compositionally biased stretch (basic residues) spans glutamine 80–lysine 91. One copy of the I repeat lies at asparagine 111–phenylalanine 408. A helical membrane pass occupies residues proline 125–isoleucine 143. Residues tyrosine 144–asparagine 158 are Extracellular-facing. Asparagine 153 carries an N-linked (GlcNAc...) asparagine glycan. A helical transmembrane segment spans residues leucine 159–isoleucine 179. The Cytoplasmic portion of the chain corresponds to alanine 180–asparagine 188. A helical membrane pass occupies residues alanine 189–serine 209. The Extracellular segment spans residues alanine 210 to aspartate 232. A helical membrane pass occupies residues valine 233–valine 251. Residues proline 252 to leucine 268 lie on the Cytoplasmic side of the membrane. A helical transmembrane segment spans residues leucine 269 to phenylalanine 290. Topologically, residues methionine 291 to alanine 350 are extracellular. 2 disulfides stabilise this stretch: cysteine 298–cysteine 326 and cysteine 316–cysteine 332. The N-linked (GlcNAc...) asparagine glycan is linked to asparagine 328. Positions phenylalanine 351 to valine 372 form an intramembrane region, pore-forming. Positions threonine 361 to glycine 364 match the Selectivity filter of repeat I motif. Glutamate 363 contacts Ca(2+). Residues asparagine 373–tryptophan 380 lie on the Extracellular side of the membrane. The chain crosses the membrane as a helical span at residues proline 381–leucine 401. Residues glycine 402 to asparagine 524 lie on the Cytoplasmic side of the membrane. Positions glutamine 428 to glutamate 445 are AID/alpha-interaction domain; mediates interaction with the beta subunit. The segment at proline 449–glycine 481 is disordered. Positions serine 465–asparagine 478 are enriched in polar residues. Serine 469 carries the post-translational modification Phosphoserine. Threonine 476 is subject to Phosphothreonine. Residues asparagine 510–leucine 756 form an II repeat. Residues valine 525–serine 543 traverse the membrane as a helical segment. Residues glutamate 544 to glutamate 554 are Extracellular-facing. Residues valine 555–methionine 575 traverse the membrane as a helical segment. The Cytoplasmic segment spans residues tyrosine 576–serine 586. A helical transmembrane segment spans residues leucine 587–valine 606. The Extracellular portion of the chain corresponds to glutamate 607–glycine 615. Residues isoleucine 616–tryptophan 634 traverse the membrane as a helical segment. Topologically, residues asparagine 635–serine 653 are cytoplasmic. The helical transmembrane segment at leucine 654–phenylalanine 673 threads the bilayer. The Extracellular portion of the chain corresponds to glycine 674–proline 693. The pore-forming intramembrane region spans glutamine 694–glycine 715. A Selectivity filter of repeat II motif is present at residues threonine 704 to aspartate 707. Residue glutamate 706 participates in Ca(2+) binding. The Extracellular segment spans residues isoleucine 716–proline 725. A helical membrane pass occupies residues glycine 726–leucine 745. Topologically, residues asparagine 746–threonine 900 are cytoplasmic. The interval serine 764–proline 861 is disordered. Positions serine 783 to glutamate 792 are enriched in basic and acidic residues. Serine 808 and serine 815 each carry phosphoserine. An interaction with STAC2 region spans residues asparagine 829 to glutamate 876. The segment covering threonine 843–glutamate 852 has biased composition (acidic residues). The stretch at asparagine 887–phenylalanine 1189 is one III repeat. A helical membrane pass occupies residues isoleucine 901–alanine 919. The Extracellular portion of the chain corresponds to glutamate 920–histidine 931. The chain crosses the membrane as a helical span at residues isoleucine 932–isoleucine 952. The Cytoplasmic segment spans residues leucine 953–asparagine 987. The chain crosses the membrane as a helical span at residues tyrosine 988–isoleucine 1006. Residues glutamine 1007–valine 1013 are Extracellular-facing. Residues valine 1014 to alanine 1032 traverse the membrane as a helical segment. The Cytoplasmic segment spans residues lysine 1033–asparagine 1051. A helical membrane pass occupies residues isoleucine 1052–phenylalanine 1071. The Extracellular segment spans residues lysine 1072 to valine 1121. Cysteines 1078 and 1089 form a disulfide. Positions arginine 1109 to lysine 1198 are dihydropyridine binding. An intramembrane region (pore-forming) is located at residues leucine 1122–tyrosine 1142. Residues threonine 1133 to glycine 1136 carry the Selectivity filter of repeat III motif. Glutamate 1135 provides a ligand contact to Ca(2+). The Extracellular portion of the chain corresponds to arginine 1143–arginine 1159. The chain crosses the membrane as a helical span at residues valine 1160–phenylalanine 1181. Residues valine 1182–threonine 1239 lie on the Cytoplasmic side of the membrane. An IV repeat occupies asparagine 1226 to phenylalanine 1527. The chain crosses the membrane as a helical span at residues tyrosine 1240–tyrosine 1261. Topologically, residues glycine 1262–isoleucine 1269 are extracellular. The helical transmembrane segment at alanine 1270–isoleucine 1291 threads the bilayer. Over alanine 1292–aspartate 1301 the chain is Cytoplasmic. A helical transmembrane segment spans residues proline 1302 to serine 1321. Residues glutamate 1322–serine 1372 lie on the Extracellular side of the membrane. Residues isoleucine 1373–glycine 1391 traverse the membrane as a helical segment. At glutamate 1392–proline 1409 the chain is on the cytoplasmic side. The helical transmembrane segment at tyrosine 1410–phenylalanine 1430 threads the bilayer. Residues glycine 1431–glutamine 1452 lie on the Extracellular side of the membrane. The N-linked (GlcNAc...) asparagine glycan is linked to asparagine 1436. The pore-forming intramembrane region spans alanine 1453–leucine 1471. The short motif at threonine 1462–alanine 1465 is the Selectivity filter of repeat IV element. Residues alanine 1472–phenylalanine 1499 are Extracellular-facing. The interval lysine 1478–lysine 1546 is dihydropyridine binding. An intrachain disulfide couples cysteine 1479 to cysteine 1495. The N-linked (GlcNAc...) asparagine glycan is linked to asparagine 1487. Residues glutamate 1492–tryptophan 1534 form a phenylalkylamine binding region. The chain crosses the membrane as a helical span at residues alanine 1500–methionine 1524. At aspartate 1525 to leucine 2221 the chain is on the cytoplasmic side. Residues aspartate 1659–glycine 1686 form an important for interaction with STAC1, STAC2 and STAC3 region. The tract at residues lysine 1665 to glutamine 1685 is calmodulin-binding IQ region. The interval leucine 1699 to serine 1718 is important for localization in at the junctional membrane. Phosphoserine is present on residues serine 1718 and serine 1739. The interval isoleucine 1778–serine 1847 is disordered. Polar residues predominate over residues serine 1799–serine 1811. Low complexity predominate over residues asparagine 1812 to alanine 1822. Serine 1981 is subject to Phosphoserine; by PKA. 2 disordered regions span residues alanine 2029–serine 2063 and alanine 2186–leucine 2221.

It belongs to the calcium channel alpha-1 subunit (TC 1.A.1.11) family. CACNA1C subfamily. As to quaternary structure, component of a calcium channel complex consisting of a pore-forming alpha subunit (CACNA1C) and ancillary beta, gamma and delta subunits. The channel complex contains alpha, beta, gamma and delta subunits in a 1:1:1:1 ratio, i.e. it contains only one of each type of subunit. CACNA1C channel activity is modulated by ancillary subunits, such as CACNB1, CACNB2, CACNB3, CACNA2D1 and CACNA2D4. Interacts with the gamma subunits CACNG4, CACNG6, CACNG7 and CACNG8. Interacts with CACNB1. Interacts with CACNB2. Identified in a complex with CACNA2D4 and CACNB3. Interacts with CACNB3. Interacts with CACNA2D1. Interacts with CACNA2D4. Interacts with CALM1. Interacts (via the N-terminus and the C-terminal C and IQ motifs) with CABP1; this inhibits Ca(2+)-dependent channel inactivation. The binding via the C motif is calcium independent whereas the binding via IQ requires the presence of calcium and is mutually exclusive with calmodulin binding. The binding to the cytoplasmic N-terminal domain is calcium independent but is essential for the channel modulation. Interacts (via C-terminal CDB motif) with CABP5; in a calcium-dependent manner. Interacts with CIB1; the interaction increases upon cardiomyocytes hypertrophy. Interacts with STAC2 and STAC3; this inhibits channel inactivation. (Microbial infection) Interacts with influenzavirus H1 hemagglutinin. Phosphorylation by PKA at Ser-1981 activates the channel. Elevated levels of blood glucose lead to increased phosphorylation by PKA. Detected throughout the brain, including hippocampus, cerebellum and amygdala, throughout the heart and vascular system, including ductus arteriosus, in urinary bladder, and in retina and sclera in the eye. Expressed in brain, heart, jejunum, ovary, pancreatic beta-cells and vascular smooth muscle. Overall expression is reduced in atherosclerotic vascular smooth muscle.

It localises to the cell membrane. Its subcellular location is the sarcolemma. It is found in the perikaryon. The protein localises to the postsynaptic density membrane. The protein resides in the cell projection. It localises to the dendrite. Its subcellular location is the T-tubule. The catalysed reaction is Ca(2+)(in) = Ca(2+)(out). With respect to regulation, inhibited by dihydropyridines (DHP), such as isradipine. Inhibited by nifedipine. Channel activity is regulated by Ca(2+) and calmodulin. Binding of STAC1, STAC2 or STAC3 to a region that overlaps with the calmodulin binding site inhibits channel inactivation by Ca(2+) and calmodulin. Binding of calmodulin or CABP1 at the same regulatory sites results in opposite effects on the channel function. Shear stress and pressure increases calcium channel activity. In terms of biological role, pore-forming, alpha-1C subunit of the voltage-gated calcium channel that gives rise to L-type calcium currents. Mediates influx of calcium ions into the cytoplasm, and thereby triggers calcium release from the sarcoplasm. Plays an important role in excitation-contraction coupling in the heart. Required for normal heart development and normal regulation of heart rhythm. Required for normal contraction of smooth muscle cells in blood vessels and in the intestine. Essential for normal blood pressure regulation via its role in the contraction of arterial smooth muscle cells. Long-lasting (L-type) calcium channels belong to the 'high-voltage activated' (HVA) group. Its function is as follows. Pore-forming, alpha-1C subunit of the voltage-gated calcium channel that gives rise to L-type calcium currents. (Microbial infection) Acts as a receptor for Influenzavirus. May play a critical role in allowing virus entry when sialylated and expressed on lung tissues. This Homo sapiens (Human) protein is Voltage-dependent L-type calcium channel subunit alpha-1C (CACNA1C).